Here is a 933-residue protein sequence, read N- to C-terminus: Protein translocase subunit SecA (933 aa).

ATP is bound by residues Gln87, 105–109 (GEGKT), and Asp515. Zn(2+) contacts are provided by Cys917, Cys919, Cys928, and His929.

The protein belongs to the SecA family. In terms of assembly, monomer and homodimer. Part of the essential Sec protein translocation apparatus which comprises SecA, SecYEG and auxiliary proteins SecDF-YajC and YidC. Zn(2+) serves as cofactor.

It is found in the cell inner membrane. Its subcellular location is the cytoplasm. The catalysed reaction is ATP + H2O + cellular proteinSide 1 = ADP + phosphate + cellular proteinSide 2.. Functionally, part of the Sec protein translocase complex. Interacts with the SecYEG preprotein conducting channel. Has a central role in coupling the hydrolysis of ATP to the transfer of proteins into and across the cell membrane, serving both as a receptor for the preprotein-SecB complex and as an ATP-driven molecular motor driving the stepwise translocation of polypeptide chains across the membrane. This is Protein translocase subunit SecA from Burkholderia cenocepacia (strain ATCC BAA-245 / DSM 16553 / LMG 16656 / NCTC 13227 / J2315 / CF5610) (Burkholderia cepacia (strain J2315)).